The following is a 152-amino-acid chain: Superoxide dismutase [Cu-Zn] 1 (152 aa).

Positions 45, 47, and 62 each coordinate Cu cation. Cys56 and Cys145 are oxidised to a cystine. His62, His70, His79, and Asp82 together coordinate Zn(2+). His119 provides a ligand contact to Cu cation.

Belongs to the Cu-Zn superoxide dismutase family. As to quaternary structure, homodimer. Interacts with DJ1A and CCS. Requires Cu cation as cofactor. Zn(2+) serves as cofactor. As to expression, expressed in leaves (at protein level). The spatial localization is regulated by miR398-mediated silencing. Mostly present in flowers, old rosette leaves and inflorescence, and, to a lower extent, in cauline leaves, stems and roots.

It localises to the cytoplasm. Its subcellular location is the cytosol. The protein resides in the nucleus. The catalysed reaction is 2 superoxide + 2 H(+) = H2O2 + O2. Functionally, destroys radicals which are normally produced within the cells and which are toxic to biological systems. The protein is Superoxide dismutase [Cu-Zn] 1 (CSD1) of Arabidopsis thaliana (Mouse-ear cress).